A 208-amino-acid polypeptide reads, in one-letter code: ATP phosphoribosyltransferase (208 aa).

This sequence belongs to the ATP phosphoribosyltransferase family. Short subfamily. In terms of assembly, heteromultimer composed of HisG and HisZ subunits.

It localises to the cytoplasm. It catalyses the reaction 1-(5-phospho-beta-D-ribosyl)-ATP + diphosphate = 5-phospho-alpha-D-ribose 1-diphosphate + ATP. Its pathway is amino-acid biosynthesis; L-histidine biosynthesis; L-histidine from 5-phospho-alpha-D-ribose 1-diphosphate: step 1/9. Its function is as follows. Catalyzes the condensation of ATP and 5-phosphoribose 1-diphosphate to form N'-(5'-phosphoribosyl)-ATP (PR-ATP). Has a crucial role in the pathway because the rate of histidine biosynthesis seems to be controlled primarily by regulation of HisG enzymatic activity. This chain is ATP phosphoribosyltransferase, found in Oceanobacillus iheyensis (strain DSM 14371 / CIP 107618 / JCM 11309 / KCTC 3954 / HTE831).